An 849-amino-acid polypeptide reads, in one-letter code: MAP7 domain-containing protein 1 (849 aa).

Disordered stretches follow at residues methionine 1–arginine 151 and glutamate 186–lysine 210. The span at glutamate 24–proline 41 shows a compositional bias: pro residues. Phosphothreonine is present on residues threonine 49 and threonine 53. Serine 72 and serine 95 each carry phosphoserine. Threonine 99 is modified (phosphothreonine). Phosphoserine is present on residues serine 115 and serine 118. At threonine 120 the chain carries Phosphothreonine. Phosphoserine occurs at positions 125 and 127. Residues glutamine 132 to arginine 151 are compositionally biased toward basic and acidic residues. Residues glutamate 167 to lysine 223 adopt a coiled-coil conformation. Phosphoserine is present on residues serine 256, serine 275, serine 315, serine 368, and serine 401. Positions threonine 318–aspartate 815 are disordered. Over residues arginine 407–arginine 437 the composition is skewed to basic and acidic residues. A phosphoserine mark is found at serine 444, serine 448, serine 454, and serine 460. Residues alanine 457–tryptophan 474 show a composition bias toward polar residues. Lysine 462 participates in a covalent cross-link: Glycyl lysine isopeptide (Lys-Gly) (interchain with G-Cter in SUMO2). 2 positions are modified to phosphoserine: serine 479 and serine 496. The span at serine 479 to proline 497 shows a compositional bias: pro residues. Positions proline 523–proline 539 are enriched in basic and acidic residues. Residues proline 542–alanine 556 are compositionally biased toward pro residues. Phosphoserine occurs at positions 544, 548, and 552. Threonine 554 bears the Phosphothreonine mark. A compositionally biased stretch (low complexity) spans proline 568–phenylalanine 582. A coiled-coil region spans residues threonine 602–isoleucine 724. Residues threonine 603–glutamate 743 are compositionally biased toward basic and acidic residues.

This sequence belongs to the MAP7 family.

The protein localises to the cytoplasm. Its subcellular location is the cytoskeleton. The protein resides in the spindle. It localises to the microtubule organizing center. It is found in the centrosome. The protein localises to the midbody. Microtubule-stabilizing protein involved in the control of cell motility and neurite outgrowth. Facilitate microtubule stabilization through the maintenance of acetylated stable microtubules. This chain is MAP7 domain-containing protein 1 (Map7d1), found in Rattus norvegicus (Rat).